Here is a 515-residue protein sequence, read N- to C-terminus: ATP synthase subunit alpha (515 aa).

An ATP-binding site is contributed by 171 to 178 (GDRQTGKT).

The protein belongs to the ATPase alpha/beta chains family. As to quaternary structure, F-type ATPases have 2 components, CF(1) - the catalytic core - and CF(0) - the membrane proton channel. CF(1) has five subunits: alpha(3), beta(3), gamma(1), delta(1), epsilon(1). CF(0) has three main subunits: a(1), b(2) and c(9-12). The alpha and beta chains form an alternating ring which encloses part of the gamma chain. CF(1) is attached to CF(0) by a central stalk formed by the gamma and epsilon chains, while a peripheral stalk is formed by the delta and b chains.

The protein localises to the cell inner membrane. It carries out the reaction ATP + H2O + 4 H(+)(in) = ADP + phosphate + 5 H(+)(out). Functionally, produces ATP from ADP in the presence of a proton gradient across the membrane. The alpha chain is a regulatory subunit. The sequence is that of ATP synthase subunit alpha from Stenotrophomonas maltophilia (strain R551-3).